The sequence spans 396 residues: Arginine biosynthesis bifunctional protein ArgJ (396 aa).

Substrate is bound by residues Thr-150, Lys-177, Thr-188, Glu-267, Asn-391, and Thr-396. Thr-188 serves as the catalytic Nucleophile.

This sequence belongs to the ArgJ family. As to quaternary structure, heterotetramer of two alpha and two beta chains.

It localises to the cytoplasm. It carries out the reaction N(2)-acetyl-L-ornithine + L-glutamate = N-acetyl-L-glutamate + L-ornithine. It catalyses the reaction L-glutamate + acetyl-CoA = N-acetyl-L-glutamate + CoA + H(+). The protein operates within amino-acid biosynthesis; L-arginine biosynthesis; L-ornithine and N-acetyl-L-glutamate from L-glutamate and N(2)-acetyl-L-ornithine (cyclic): step 1/1. Its pathway is amino-acid biosynthesis; L-arginine biosynthesis; N(2)-acetyl-L-ornithine from L-glutamate: step 1/4. Catalyzes two activities which are involved in the cyclic version of arginine biosynthesis: the synthesis of N-acetylglutamate from glutamate and acetyl-CoA as the acetyl donor, and of ornithine by transacetylation between N(2)-acetylornithine and glutamate. This is Arginine biosynthesis bifunctional protein ArgJ from Wolinella succinogenes (strain ATCC 29543 / DSM 1740 / CCUG 13145 / JCM 31913 / LMG 7466 / NCTC 11488 / FDC 602W) (Vibrio succinogenes).